We begin with the raw amino-acid sequence, 570 residues long: Transmembrane 7 superfamily member 3 (570 aa).

The signal sequence occupies residues 1–21 (MGFLQLLVVAVLASEHRVAGA). 5 N-linked (GlcNAc...) asparagine glycosylation sites follow: N27, N61, N75, N87, and N264. Transmembrane regions (helical) follow at residues 296–313 (VFFTLFALLGFFICFFGH), 320–342 (LFFIGFIIMGFFFYILITRLTPI), 347–369 (NLILTAVTGSVGGMFLVAVWWRF), 371–393 (ILSICMLCVGLVLGFLISSVTFF), 408–430 (FWVTFSCIAILIPVVFMGCLRIL), 437–459 (VIGSYSVVLAIDSYWSTSLSYIT), and 479–501 (PFQTNDFIILAVWGMLAVSGITL).

As to expression, widely expressed. Highly expressed in kidney and pancreas.

The protein localises to the cell membrane. Involved in the inhibition of cytokine-induced death of pancreatic beta cells. Involved in the promotion of insulin secretion from pancreatic beta cells. Is a downstream transcriptional target of p53/TP53, and acts as a pro-survival homeostatic factor that attenuates the development of cellular stress. Maintains protein homeostasis and promotes cell survival through attenuation of endoplasmic reticulum (ER) stress and the subsequent induction of unfolded protein response (UPR). The chain is Transmembrane 7 superfamily member 3 (TM7SF3) from Homo sapiens (Human).